Reading from the N-terminus, the 181-residue chain is Translationally-controlled tumor protein homolog (181 aa).

The region spanning 1–181 (MLIFKDAFTD…VKEALIEEKQ (181 aa)) is the TCTP domain.

The protein belongs to the TCTP family.

It is found in the cytoplasm. Its function is as follows. Involved in calcium binding and microtubule stabilization. This chain is Translationally-controlled tumor protein homolog, found in Brugia malayi (Filarial nematode worm).